We begin with the raw amino-acid sequence, 278 residues long: Tryptophan synthase alpha chain (278 aa).

Residues Glu49 and Asp60 each act as proton acceptor in the active site.

The protein belongs to the TrpA family. In terms of assembly, tetramer of two alpha and two beta chains.

It catalyses the reaction (1S,2R)-1-C-(indol-3-yl)glycerol 3-phosphate + L-serine = D-glyceraldehyde 3-phosphate + L-tryptophan + H2O. It participates in amino-acid biosynthesis; L-tryptophan biosynthesis; L-tryptophan from chorismate: step 5/5. Its function is as follows. The alpha subunit is responsible for the aldol cleavage of indoleglycerol phosphate to indole and glyceraldehyde 3-phosphate. This is Tryptophan synthase alpha chain from Psychrobacter arcticus (strain DSM 17307 / VKM B-2377 / 273-4).